The following is a 277-amino-acid chain: MILKKYKPTTPSLRGLVQIDRSLLWKGDPVKKLTVGMIESAGRNNTGRITVYHRGGGHKTKYRYIDFKRSNYNIPGIVERLEYDPNRTCFIALIKDNENNFSYILAPHDLKVGDTVITGNDIDIRIGNTLPLRNIPIGTMIHNIELNPGKGGKIVRSAGSSAQLISKDENGFCMLKLPSGEYRLFPNNSLATIGILSNIDNKNIKIGKAGRSRWMGRRPIVRGVAMNPVDHPHGGGEGKTSGGRPSVTPWSWPTKGQPTRSKRKYNKLIVQRAKKKI.

A disordered region spans residues 225-263 (AMNPVDHPHGGGEGKTSGGRPSVTPWSWPTKGQPTRSKR). Residues 248-259 (TPWSWPTKGQPT) show a composition bias toward polar residues.

It belongs to the universal ribosomal protein uL2 family.

It is found in the mitochondrion. The polypeptide is Large ribosomal subunit protein uL2m (RPL2) (Reclinomonas americana).